The primary structure comprises 73 residues: Capsid protein G8P (73 aa).

The signal sequence occupies residues 1 to 23 (MKKSLVLKASVAVATLVPMLSFA). The Periplasmic segment spans residues 24–47 (AEGDDPAKAAFNSLQASATEYIGY). The helical transmembrane segment at 48–68 (AWAMVVVIVGATIGIKLFKKF) threads the bilayer. The Cytoplasmic segment spans residues 69 to 73 (TSKAS).

This sequence belongs to the inovirus capsid protein family. In terms of assembly, homomultimerizes. There are about 2,700 copies of this protein in the phage capsid.

It localises to the virion. It is found in the host cell inner membrane. In terms of biological role, self assembles to form a helical capsid wrapping up the viral genomic DNA. The capsid displays a filamentous structure with a length of 760-1950 nm and a width of 6-8 nm. The virion assembly and budding take place at the host inner membrane. This chain is Capsid protein G8P (VIII), found in Enterobacteria phage M13 (Bacteriophage M13).